Consider the following 333-residue polypeptide: Holliday junction branch migration complex subunit RuvB (333 aa).

The segment at 1 to 182 (MTNRILDMEQ…FGITGHMEYY (182 aa)) is large ATPase domain (RuvB-L). Residues Leu-21, Arg-22, Gly-63, Lys-66, Thr-67, Thr-68, 129 to 131 (EDF), Arg-172, Tyr-182, and Arg-219 contribute to the ATP site. Residue Thr-67 participates in Mg(2+) binding. The interval 183–253 (ELADLTEIVE…ITDKALTMLD (71 aa)) is small ATPAse domain (RuvB-S). The interval 256–333 (REGLDYVDQK…EHLGYPYTEK (78 aa)) is head domain (RuvB-H). Residues Arg-292, Arg-311, Arg-313, and Arg-316 each contribute to the DNA site.

It belongs to the RuvB family. In terms of assembly, homohexamer. Forms an RuvA(8)-RuvB(12)-Holliday junction (HJ) complex. HJ DNA is sandwiched between 2 RuvA tetramers; dsDNA enters through RuvA and exits via RuvB. An RuvB hexamer assembles on each DNA strand where it exits the tetramer. Each RuvB hexamer is contacted by two RuvA subunits (via domain III) on 2 adjacent RuvB subunits; this complex drives branch migration. In the full resolvosome a probable DNA-RuvA(4)-RuvB(12)-RuvC(2) complex forms which resolves the HJ.

It localises to the cytoplasm. It catalyses the reaction ATP + H2O = ADP + phosphate + H(+). Its function is as follows. The RuvA-RuvB-RuvC complex processes Holliday junction (HJ) DNA during genetic recombination and DNA repair, while the RuvA-RuvB complex plays an important role in the rescue of blocked DNA replication forks via replication fork reversal (RFR). RuvA specifically binds to HJ cruciform DNA, conferring on it an open structure. The RuvB hexamer acts as an ATP-dependent pump, pulling dsDNA into and through the RuvAB complex. RuvB forms 2 homohexamers on either side of HJ DNA bound by 1 or 2 RuvA tetramers; 4 subunits per hexamer contact DNA at a time. Coordinated motions by a converter formed by DNA-disengaged RuvB subunits stimulates ATP hydrolysis and nucleotide exchange. Immobilization of the converter enables RuvB to convert the ATP-contained energy into a lever motion, pulling 2 nucleotides of DNA out of the RuvA tetramer per ATP hydrolyzed, thus driving DNA branch migration. The RuvB motors rotate together with the DNA substrate, which together with the progressing nucleotide cycle form the mechanistic basis for DNA recombination by continuous HJ branch migration. Branch migration allows RuvC to scan DNA until it finds its consensus sequence, where it cleaves and resolves cruciform DNA. The protein is Holliday junction branch migration complex subunit RuvB of Streptococcus suis (strain 98HAH33).